The chain runs to 1016 residues: Enhancer of polycomb-like protein 1 (1016 aa).

5 disordered regions span residues 1–50, 96–119, 450–488, 499–518, and 842–1016; these read MAIH…NDLE, LLGS…DASV, KEED…TIGT, GQVH…VKLP, and ARMR…PNRK. Positions 35–50 are enriched in polar residues; that stretch reads YKQSDLPTLNASNDLE. Composition is skewed to basic and acidic residues over residues 103-116 and 457-473; these read DGDK…KKTD and ESSK…DSSR. Positions 475 to 488 are enriched in polar residues; that stretch reads GSATSMPGSATIGT. Residues 842–883 are compositionally biased toward low complexity; sequence ARMRTLQQQQRNNKQQAAGQSSGSSSASLGSNTNSNSSISGQ. The span at 884–902 shows a compositional bias: polar residues; it reads ADQGQTNLTNSGITRQGGA. A compositionally biased stretch (low complexity) spans 904–923; it reads VNGSQTSTTNNTRSSVSGGS. Positions 928–956 are enriched in polar residues; sequence LPTQSSQRSNTNSPLLASQPQGYSQQQKF. The segment covering 960–971 has biased composition (low complexity); sequence PPTSQSQSQSPT. Polar residues predominate over residues 976 to 994; it reads QLQTSKMYNKHGSNITPSN.

Belongs to the enhancer of polycomb family. In terms of assembly, component of the NuA4 histone acetyltransferase complex.

It is found in the nucleus. Its function is as follows. Component of the NuA4 histone acetyltransferase complex which is involved in transcriptional activation of selected genes principally by acetylation of nucleosomal histone H4 and H2A. The NuA4 complex is also involved in DNA repair. Involved in gene silencing by neighboring heterochromatin, blockage of the silencing spreading along the chromosome, and required for cell cycle progression through G2/M. The polypeptide is Enhancer of polycomb-like protein 1 (EPL1) (Debaryomyces hansenii (strain ATCC 36239 / CBS 767 / BCRC 21394 / JCM 1990 / NBRC 0083 / IGC 2968) (Yeast)).